The chain runs to 677 residues: Methionine--tRNA ligase (677 aa).

The 'HIGH' region signature appears at 15-25 (PYANGSIHLGH). Residues Cys-146, Cys-149, Cys-159, and Cys-162 each contribute to the Zn(2+) site. Positions 333-337 (KMSKS) match the 'KMSKS' region motif. ATP is bound at residue Lys-336. Residues 575–677 (DFAKVDLRVA…AGAKPGHQVK (103 aa)) form the tRNA-binding domain.

Belongs to the class-I aminoacyl-tRNA synthetase family. MetG type 1 subfamily. Homodimer. It depends on Zn(2+) as a cofactor.

It is found in the cytoplasm. The catalysed reaction is tRNA(Met) + L-methionine + ATP = L-methionyl-tRNA(Met) + AMP + diphosphate. In terms of biological role, is required not only for elongation of protein synthesis but also for the initiation of all mRNA translation through initiator tRNA(fMet) aminoacylation. This chain is Methionine--tRNA ligase, found in Shigella boydii serotype 18 (strain CDC 3083-94 / BS512).